The chain runs to 28 residues: Omega-agatoxin-Aa2a (28 aa).

Belongs to the neurotoxin 04 (omega-agtx) family. 03 (type II/III omega-agtx) subfamily. In terms of tissue distribution, expressed by the venom gland.

Its subcellular location is the secreted. Functionally, omega-agatoxin are antagonist of voltage-gated calcium channels. They block insect neuromuscular transmission presynaptically. Potent blocker of N-type calcium channels (Cav2.2/CACNA1B). This Agelenopsis aperta (North American funnel-web spider) protein is Omega-agatoxin-Aa2a.